The following is a 301-amino-acid chain: MNTVFNGKDFANKYYLMLKEFLKERNLRNKITLKVVLANDEPASKLYVSIKNRVAKEIGLNVEVIKLSANSVQSDILEVIDRENKNLSTDGIIVQLPLLKGMDLNSILNGIVSSKDVDGLSFVNLGKMILGDKKGFVPCTALAVLKILRDEGIKTSGKTVVVVGRSPLVGRPISILLSSKPHDATVIACHSKSIYLDVYLRQADIIISAVGKPKLIDKSMLCGKPYVIDIGISEIETDAGKILSGDTDFDNIKDCVKFITPVKGGIGPVTVLMLMFNTIKAHLINNNMFDVLDRLEKLVEV.

NADP(+)-binding positions include 164 to 166 (GRS), serine 191, and isoleucine 232.

It belongs to the tetrahydrofolate dehydrogenase/cyclohydrolase family. As to quaternary structure, homodimer.

The catalysed reaction is (6R)-5,10-methylene-5,6,7,8-tetrahydrofolate + NADP(+) = (6R)-5,10-methenyltetrahydrofolate + NADPH. The enzyme catalyses (6R)-5,10-methenyltetrahydrofolate + H2O = (6R)-10-formyltetrahydrofolate + H(+). It participates in one-carbon metabolism; tetrahydrofolate interconversion. Functionally, catalyzes the oxidation of 5,10-methylenetetrahydrofolate to 5,10-methenyltetrahydrofolate and then the hydrolysis of 5,10-methenyltetrahydrofolate to 10-formyltetrahydrofolate. The chain is Bifunctional protein FolD from Borreliella afzelii (strain PKo) (Borrelia afzelii).